The primary structure comprises 193 residues: DNA damage-inducible transcript 4-like protein (193 aa).

It belongs to the DDIT4 family.

It localises to the cytoplasm. Inhibits cell growth by regulating the TOR signaling pathway upstream of the TSC1-TSC2 complex and downstream of AKT1. The polypeptide is DNA damage-inducible transcript 4-like protein (DDIT4L) (Bos taurus (Bovine)).